Here is a 329-residue protein sequence, read N- to C-terminus: NAD kinase (329 aa).

The tract at residues 1–26 (MTTPGTDHNADQGADSGDKATKAASG) is disordered. D104 acts as the Proton acceptor in catalysis. NAD(+) is bound by residues 104–105 (DG), R109, 179–180 (NE), D209, and 220–225 (TAYAFS).

The protein belongs to the NAD kinase family. The cofactor is a divalent metal cation.

The protein localises to the cytoplasm. The catalysed reaction is NAD(+) + ATP = ADP + NADP(+) + H(+). In terms of biological role, involved in the regulation of the intracellular balance of NAD and NADP, and is a key enzyme in the biosynthesis of NADP. Catalyzes specifically the phosphorylation on 2'-hydroxyl of the adenosine moiety of NAD to yield NADP. The protein is NAD kinase of Corynebacterium jeikeium (strain K411).